The primary structure comprises 109 residues: Large ribosomal subunit protein uL24 (109 aa).

Belongs to the universal ribosomal protein uL24 family. Part of the 50S ribosomal subunit.

In terms of biological role, one of two assembly initiator proteins, it binds directly to the 5'-end of the 23S rRNA, where it nucleates assembly of the 50S subunit. Functionally, one of the proteins that surrounds the polypeptide exit tunnel on the outside of the subunit. The protein is Large ribosomal subunit protein uL24 of Rickettsia bellii (strain RML369-C).